The sequence spans 919 residues: MSKDSTSLGVRTIVIACLVLLGCCIVEAVPTTPSSQPSTPASTQSAKTVDQTLLPTETPDPLRLAVRESGILAEDGDFYTCPPPTGSTVVRIEPPRSCPKFDLGRNFTEGIAVIFKENIAPYKFRANVYYKDIVVTKVWKGYSHTSLSDRYNDRVPVSVEEIFTLIDSKGKCSSKAEYLRDNIMHHAYHDDEDEVELDLVPSKFATPGARAWQTTNDTTSYVGWMPWRHYTSTSVNCIVEEVEARSVYPYDSFALSTGDIVYTSPFYGLRSAAQLEHNSYAQERFRQVEGYQPRDLDSKLQAGEPVTKNFITTPHVTVSWNWTEKKIEACTLTKWKEVDELVRDEFRGSYRFTIRSISSTFISNTTQFKLEDAPLTDCVSKEAKDAIDSIYRKQYESTHVFSGDVEFYLARGGFLIAFRPMISNELARLYLNELVRSNRTYDLKNLLNPNANHNTNRTRRSLLSIPEPTPTQESLHREQILHRLHKRAVEAANSTNSSNVTAKQLELIKTTSSIEFAMLQFAYDHIQSHVNEMLSRIATAWCTLQNKERTLWNEMVKVNPSAIVSATLDERVAARVLGDVIAITHCVKIEGNVYLQNSMRSSDSNTCYSRPPVTFTITKNANSRGTIEGQLGEENEVYTERKLIEPCAINQKRYFKFGKEYVYYENYTYVRKVPPTEIEVISTYVELNLTLLEDREFLPLEVYTRAELEDTGLLDYSEIQRRNQLHALRFYDIDSVVNVDNTAVIMQGIATFFKGLGKVGEAVGTLVLGAAGAVVSTVSGIASFINNPFGGLAIGLLVIAGLVAAFFAYRYVMQLRSNPMKALYPITTRSLKNKAKASYGQNDDDDTSDFDEAKLEEAREMIKYMSMVSALEKQEKKAMKKNKGVGLIASNVSKLALRRRGPKYTRLREDDPMESEKMV.

A signal peptide spans 1 to 28; it reads MSKDSTSLGVRTIVIACLVLLGCCIVEA. Topologically, residues 29–788 are virion surface; it reads VPTTPSSQPS…SGIASFINNP (760 aa). 5 disulfide bridges follow: Cys81/Cys586, Cys98/Cys542, Cys172/Cys237, Cys330/Cys378, and Cys607/Cys647. The N-linked (GlcNAc...) asparagine; by host glycan is linked to Asn106. The involved in fusion and/or binding to host membrane stretch occupies residues 138–144; that stretch reads VWKGYSH. Asn216 carries N-linked (GlcNAc...) asparagine; by host glycosylation. Residues 223–231 form an involved in fusion and/or binding to host membrane region; sequence GWMPWRHYT. Residues Asn321, Asn364, Asn438, Asn456, Asn493, Asn496, and Asn499 are each glycosylated (N-linked (GlcNAc...) asparagine; by host). Residues Asn666 and Asn688 are each glycosylated (N-linked (GlcNAc...) asparagine; by host). Hydrophobic membrane proximal region stretches follow at residues 733–786 and 765–785; these read IDSV…SFIN and TLVLGAAGAVVSTVSGIASFI. A helical membrane pass occupies residues 789-809; it reads FGGLAIGLLVIAGLVAAFFAY. Topologically, residues 810-919 are intravirion; it reads RYVMQLRSNP…DDPMESEKMV (110 aa). The short motif at 864–867 is the Golgi targeting element; sequence YMSM. The interval 900 to 919 is disordered; the sequence is RGPKYTRLREDDPMESEKMV. An Internalization motif motif is present at residues 904 to 907; it reads YTRL. A compositionally biased stretch (basic and acidic residues) spans 906-919; sequence RLREDDPMESEKMV.

This sequence belongs to the herpesviridae glycoprotein B family. In terms of assembly, homotrimer; disulfide-linked. Binds to heparan sulfate proteoglycans. Interacts with gH/gL heterodimer. A proteolytic cleavage by host furin generates two subunits that remain linked by disulfide bonds.

The protein localises to the virion membrane. It is found in the host cell membrane. The protein resides in the host endosome membrane. It localises to the host Golgi apparatus membrane. Functionally, envelope glycoprotein that forms spikes at the surface of virion envelope. Essential for the initial attachment to heparan sulfate moieties of the host cell surface proteoglycans. Involved in fusion of viral and cellular membranes leading to virus entry into the host cell. Following initial binding to its host receptors, membrane fusion is mediated by the fusion machinery composed at least of gB and the heterodimer gH/gL. May be involved in the fusion between the virion envelope and the outer nuclear membrane during virion egress. In Equus caballus (Horse), this protein is Envelope glycoprotein B.